The chain runs to 154 residues: Heat shock protein beta-3 (154 aa).

The segment at 48–71 is disordered; the sequence is ARGAGTPQALAEDSASTEKPPGEG. Positions 57-154 constitute a sHSP domain; that stretch reads LAEDSASTEK…VEVKDSLGTK (98 aa).

This sequence belongs to the small heat shock protein (HSP20) family.

The protein resides in the cytoplasm. The protein localises to the nucleus. Its function is as follows. Inhibitor of actin polymerization. In Mus musculus (Mouse), this protein is Heat shock protein beta-3 (Hspb3).